The sequence spans 228 residues: Heat shock 70-related protein 4 (228 aa).

The segment at 57–80 (RWHEPPGNTVFDEAHDRPQVRRPD) is disordered. The segment covering 68–80 (DEAHDRPQVRRPD) has biased composition (basic and acidic residues).

Belongs to the heat shock protein 70 family.

This is Heat shock 70-related protein 4 (HSP70.4) from Leishmania major.